Consider the following 652-residue polypeptide: Vacuolar fusion protein MON1 homolog A (652 aa).

The tract at residues 102-141 (MQRKRSSECLDGTLTPSDGQSMERAESPTPGMAQGMEPGA) is disordered. Ser-128 and Ser-153 each carry phosphoserine. Position 158 is a phosphothreonine (Thr-158). A disordered region spans residues 158-185 (TESEDGAASGDSHKEGTRGPPPLPTDMR). Ser-188 carries the post-translational modification Phosphoserine. Residues 211-245 (PGSSEDWLEPPGAVGRPATEPPREGTTEGDEEDAT) form a disordered region.

Belongs to the MON1/SAND family. As to quaternary structure, interacts with CCZ1. Found in a complex with RMC1, CCZ1, MON1A and MON1B. The MON1A-CCZ1B complex interacts with RIMOC1. The MON1A-CCZ1B complex interacts with RAB7A and this interaction is enhanced in the presence of RIMOC1.

Plays an important role in membrane trafficking through the secretory apparatus. Not involved in endocytic trafficking to lysosomes. Acts in concert with CCZ1, as a guanine exchange factor (GEF) for RAB7, promotes the exchange of GDP to GTP, converting it from an inactive GDP-bound form into an active GTP-bound form. The protein is Vacuolar fusion protein MON1 homolog A (MON1A) of Homo sapiens (Human).